Consider the following 49-residue polypeptide: Large ribosomal subunit protein bL33C (49 aa).

Residues 21–49 (KNKRNNPDRVEFKKYCPRDKKSTLHRETK) form a disordered region. Residues 25–49 (NNPDRVEFKKYCPRDKKSTLHRETK) are compositionally biased toward basic and acidic residues.

Belongs to the bacterial ribosomal protein bL33 family.

The protein is Large ribosomal subunit protein bL33C of Bacillus licheniformis (strain ATCC 14580 / DSM 13 / JCM 2505 / CCUG 7422 / NBRC 12200 / NCIMB 9375 / NCTC 10341 / NRRL NRS-1264 / Gibson 46).